Reading from the N-terminus, the 980-residue chain is Vacuolar protein sorting-associated protein 11 homolog (980 aa).

The stretch at 407 to 554 is one CHCR repeat; it reads YKETIGMLEP…GRDLLIHARD (148 aa). The RING-type; atypical zinc finger occupies 803–843; that stretch reads CSACDTPLQLPTVHFLCKHAYHVHCFESYNMDGSDKCPACQ. Residues 886 to 898 show a composition bias toward basic and acidic residues; the sequence is TKKTKKSEAKKDP. The interval 886-980 is disordered; it reads TKKTKKSEAK…APAPSTNPFD (95 aa). Polar residues-rich tracts occupy residues 917–937 and 947–960; these read TTIS…SRQR and TNPF…TRLS.

It belongs to the VPS11 family. In terms of assembly, probable core component of at least two putative endosomal tethering complexes, the homotypic fusion and vacuole protein sorting (HOPS) complex and the class C core vacuole/endosome tethering (CORVET) complex. Their common core is composed of the class C Vps proteins vps-11, vps-16 and vps-18, which in HOPS further associates with vps-33.1, vps-39 and vps-41 and in CORVET with vps-8 and vps-33.2.

It localises to the late endosome membrane. Its subcellular location is the lysosome membrane. Its function is as follows. Plays a role in vesicle-mediated protein trafficking to lysosomal compartments including the endocytic membrane transport pathways. Believed to act as a core component of the putative HOPS and CORVET endosomal tethering complexes which are proposed to be involved in the rab-5-to-rab-7 endosome conversion probably implicating sand-1, and via binding SNAREs and SNARE complexes to mediate tethering and docking events during SNARE-mediated membrane fusion. The HOPS complex is proposed to be recruited to Rab7 on the late endosomal membrane and to regulate late endocytic, phagocytic and autophagic traffic towards lysosomes. Within the HOPS complex, contributes to the normal development of gut granules in embryonic and adult intestinal cells. The CORVET complex is proposed to function as a Rab5 effector to mediate early endosome fusion probably in specific endosome subpopulations. Required for fusion of endosomes and autophagosomes with lysosomes. Involved in cargo transport from early to late endosomes and required for the transition from early to late endosomes. Possibly has a role in clearance of apoptotic cells during programmed cell death. This is Vacuolar protein sorting-associated protein 11 homolog from Caenorhabditis elegans.